A 568-amino-acid chain; its full sequence is Clathrin coat assembly protein AP180B (568 aa).

One can recognise an ENTH domain in the interval 1–127; the sequence is MSSLYTKLVK…EEYGRLGMDH (127 aa). A compositionally biased stretch (basic and acidic residues) spans 262 to 283; the sequence is HLREETKRQRGEPSEPQQDRKP. Residues 262-302 are disordered; sequence HLREETKRQRGEPSEPQQDRKPSTAISSTSSHNNNSNDKNK. Residue lysine 282 forms a Glycyl lysine isopeptide (Lys-Gly) (interchain with G-Cter in ubiquitin) linkage. The span at 284–298 shows a compositional bias: low complexity; it reads STAISSTSSHNNNSN. Threonine 449 carries the post-translational modification Phosphothreonine.

The protein belongs to the AP180 family. In terms of assembly, interacts with PAN1 and the clathrin heavy and light chains CHC1 and CLC1.

Its subcellular location is the bud. The protein resides in the bud neck. It localises to the cell membrane. The protein localises to the cytoplasm. Involved in endocytosis and clathrin cage assembly. This is Clathrin coat assembly protein AP180B (YAP1802) from Saccharomyces cerevisiae (strain ATCC 204508 / S288c) (Baker's yeast).